A 419-amino-acid polypeptide reads, in one-letter code: Histidine--tRNA ligase (419 aa).

Belongs to the class-II aminoacyl-tRNA synthetase family. In terms of assembly, homodimer.

The protein resides in the cytoplasm. It catalyses the reaction tRNA(His) + L-histidine + ATP = L-histidyl-tRNA(His) + AMP + diphosphate + H(+). The protein is Histidine--tRNA ligase of Thermosipho melanesiensis (strain DSM 12029 / CIP 104789 / BI429).